The sequence spans 194 residues: dTTP/UTP pyrophosphatase (194 aa).

The active-site Proton acceptor is D69.

This sequence belongs to the Maf family. YhdE subfamily. Requires a divalent metal cation as cofactor.

It is found in the cytoplasm. It carries out the reaction dTTP + H2O = dTMP + diphosphate + H(+). It catalyses the reaction UTP + H2O = UMP + diphosphate + H(+). In terms of biological role, nucleoside triphosphate pyrophosphatase that hydrolyzes dTTP and UTP. May have a dual role in cell division arrest and in preventing the incorporation of modified nucleotides into cellular nucleic acids. The sequence is that of dTTP/UTP pyrophosphatase from Symbiobacterium thermophilum (strain DSM 24528 / JCM 14929 / IAM 14863 / T).